The following is a 575-amino-acid chain: UvrABC system protein C (575 aa).

Positions 16-94 (SQPGVYRMYD…IKLYQPRYNV (79 aa)) constitute a GIY-YIG domain. One can recognise a UVR domain in the interval 204–239 (DQVLTQLISRMETASQNLEFEEAARIRDQIQAVRRV).

Belongs to the UvrC family. Interacts with UvrB in an incision complex.

It is found in the cytoplasm. Its function is as follows. The UvrABC repair system catalyzes the recognition and processing of DNA lesions. UvrC both incises the 5' and 3' sides of the lesion. The N-terminal half is responsible for the 3' incision and the C-terminal half is responsible for the 5' incision. In Shigella dysenteriae serotype 1 (strain Sd197), this protein is UvrABC system protein C.